The chain runs to 81 residues: Cytotoxin 2 (81 aa).

A signal peptide spans 1–21 (MKTLLLTLVVVTIVCLDLGYT). Intrachain disulfides connect cysteine 24/cysteine 42, cysteine 35/cysteine 59, cysteine 63/cysteine 74, and cysteine 75/cysteine 80.

This sequence belongs to the three-finger toxin family. Short-chain subfamily. Type IA cytotoxin sub-subfamily. In terms of assembly, monomer in solution; Homodimer and oligomer in the presence of negatively charged lipids forming a pore with a size ranging between 20 and 30 Angstroms. In terms of tissue distribution, expressed by the venom gland.

It localises to the secreted. Its subcellular location is the target cell membrane. Basic protein that binds to cell membrane and depolarizes cardiomyocytes. It also shows lytic activities, but 2-fold less important than that of CTX-A4. It binds to the integrin alpha-V/beta-3 (ITGAV/ITGB3) with a moderate affinity. It may interact with sulfatides in the cell membrane which induces pore formation and cell internalization and is responsible for cytotoxicity in cardiomyocytes. It may also target the mitochondrial membrane and induce mitochondrial swelling and fragmentation. The sequence is that of Cytotoxin 2 from Naja atra (Chinese cobra).